Here is a 530-residue protein sequence, read N- to C-terminus: UDP-glucuronosyltransferase 1A10 (530 aa).

The first 25 residues, 1–25, serve as a signal peptide directing secretion; that stretch reads MARAGWTSPVPLCVCLLLTCGFAEA. N71, N292, and N344 each carry an N-linked (GlcNAc...) asparagine glycan. Residues 488 to 504 traverse the membrane as a helical segment; sequence VIGFLLAVVLTVAFITF.

This sequence belongs to the UDP-glycosyltransferase family. As to quaternary structure, homodimer. Homooligomer. Interacts with UGT1A1, UGT1A3, UGT1A4, UGT1A6, UGT1A7, UGT1A8 and UGT1A9 to form heterodimers. Isoform 1 interacts with isoform 2/i2 suggesting that oligomerization is involved in negative regulation of transferase activity by isoform 2. Isoform 1 also interacts with respective i2 isoforms of UGT1A1, UGT1A3, UGT1A4, UGT1A6, UGT1A7, UGT1A8 and UGT1A9. In terms of tissue distribution, liver and colon. Isoform 1 and isoform 2 are expressed in colon, esophagus and small intestine; isoform 2 but not isoform 1 is expressed in liver or kidney.

The protein localises to the endoplasmic reticulum membrane. It catalyses the reaction glucuronate acceptor + UDP-alpha-D-glucuronate = acceptor beta-D-glucuronoside + UDP + H(+). The catalysed reaction is 17beta-estradiol + UDP-alpha-D-glucuronate = 17beta-estradiol 3-O-(beta-D-glucuronate) + UDP + H(+). The enzyme catalyses 17beta-estradiol + UDP-alpha-D-glucuronate = 17beta-estradiol 17-O-(beta-D-glucuronate) + UDP + H(+). It carries out the reaction 17alpha-estradiol + UDP-alpha-D-glucuronate = 17alpha-estradiol 3-O-(beta-D-glucuronate) + UDP + H(+). It catalyses the reaction 16alpha,17beta-estriol + UDP-alpha-D-glucuronate = 16alpha,17beta-estriol 3-O-(beta-D-glucuronate) + UDP + H(+). The catalysed reaction is 16beta,17beta-estriol + UDP-alpha-D-glucuronate = 16beta,17beta-estriol 3-O-(beta-D-glucuronate) + UDP + H(+). The enzyme catalyses 16alpha,17alpha-estriol + UDP-alpha-D-glucuronate = 16alpha,17alpha-estriol 3-O-(beta-D-glucuronate) + UDP + H(+). It carries out the reaction 16alpha-hydroxyestrone + UDP-alpha-D-glucuronate = 16alpha-hydroxyestrone 3-O-(beta-D-glucuronate) + UDP + H(+). It catalyses the reaction estrone + UDP-alpha-D-glucuronate = estrone 3-O-(beta-D-glucuronate) + UDP + H(+). The catalysed reaction is prunetin + UDP-alpha-D-glucuronate = prunetin-4'-O-beta-D-glucuronide + UDP. The enzyme catalyses (5Z,8Z,11Z,14Z)-eicosatetraenoate + UDP-alpha-D-glucuronate = O-[(5Z),(8Z),(11Z),(14Z)-eicosatetraenoyl]-beta-D-glucuronate + UDP. It carries out the reaction 15-hydroxy-(5Z,8Z,11Z,13E)-eicosatetraenoate + UDP-alpha-D-glucuronate = 15-O-(beta-D-glucuronosyl)-(5Z,8Z,11Z,14Z)-eicosatetraenoate + UDP + H(+). It catalyses the reaction prostaglandin B1 + UDP-alpha-D-glucuronate = 15-O-(beta-D-glucuronosyl)-prostaglandin B1 + UDP + H(+). The catalysed reaction is (E)-ferulate + UDP-alpha-D-glucuronate = (E)-4-O-(beta-D-glucuronosyl)-ferulate + UDP + H(+). The enzyme catalyses (E)-ferulate + UDP-alpha-D-glucuronate = (E)-ferulic acid beta-D-glucuronate ester + UDP. It carries out the reaction losartan + UDP-alpha-D-glucuronate = losartan-2-N-beta-D-glucuronide + UDP. It catalyses the reaction candesartan + UDP-alpha-D-glucuronate = candesartan O-beta-D-glucuronoside + UDP. The catalysed reaction is candesartan + UDP-alpha-D-glucuronate = candesartan-2-N-beta-D-glucuronide + UDP. The enzyme catalyses zolasartan + UDP-alpha-D-glucuronate = zolarsartan-1-N-beta-D-glucuronide + UDP. Its function is as follows. UDP-glucuronosyltransferase (UGT) that catalyzes phase II biotransformation reactions in which lipophilic substrates are conjugated with glucuronic acid to increase the metabolite's water solubility, thereby facilitating excretion into either the urine or bile. Essential for the elimination and detoxification of drugs, xenobiotics and endogenous compounds. Catalyzes the glucuronidation of endogenous estrogen hormones such as estradiol, estrone and estriol. Involved in the glucuronidation of arachidonic acid (AA) and AA-derived eicosanoids including 15-HETE and PGB1. Involved in the glucuronidation of the phytochemical ferulic acid at the phenolic or the carboxylic acid group. Also catalyzes the glucuronidation of the isoflavones genistein, daidzein, glycitein, formononetin, biochanin A and prunetin, which are phytoestrogens with anticancer and cardiovascular properties. Involved in the glucuronidation of the AGTR1 angiotensin receptor antagonist losartan, caderastan and zolarsatan, drugs which can inhibit the effect of angiotensin II. Lacks UGT glucuronidation activity but acts as a negative regulator of isoform 1. The chain is UDP-glucuronosyltransferase 1A10 from Homo sapiens (Human).